Reading from the N-terminus, the 437-residue chain is GTPase Obg (437 aa).

Positions 2–160 constitute an Obg domain; sequence SLFLDTARIE…KILLLELRVL (159 aa). The 178-residue stretch at 161-338 folds into the OBG-type G domain; sequence ADVGLVGFPS…LLARTSELLA (178 aa). GTP is bound by residues 167-174, 192-196, 214-217, 284-287, and 319-321; these read GFPSVGKS, FTTIT, DMPG, NKMD, and SGL. Positions 174 and 194 each coordinate Mg(2+). Residues 359–437 form the OCT domain; sequence GFEDEEKPFK…IQKFEFEFVD (79 aa).

Belongs to the TRAFAC class OBG-HflX-like GTPase superfamily. OBG GTPase family. In terms of assembly, monomer. Mg(2+) is required as a cofactor.

The protein localises to the cytoplasm. Functionally, an essential GTPase which binds GTP, GDP and possibly (p)ppGpp with moderate affinity, with high nucleotide exchange rates and a fairly low GTP hydrolysis rate. Plays a role in control of the cell cycle, stress response, ribosome biogenesis and in those bacteria that undergo differentiation, in morphogenesis control. The protein is GTPase Obg of Lactococcus lactis subsp. cremoris (strain SK11).